Here is a 103-residue protein sequence, read N- to C-terminus: Heme-copper oxidase subunit 4 (103 aa).

Transmembrane regions (helical) follow at residues 20-40 (VWIV…EGIA), 42-62 (NPFV…ALFF), and 75-95 (ITVS…TSVL).

It localises to the cell membrane. The protein is Heme-copper oxidase subunit 4 (aoxC) of Aeropyrum pernix (strain ATCC 700893 / DSM 11879 / JCM 9820 / NBRC 100138 / K1).